Consider the following 76-residue polypeptide: U-scoloptoxin(13)-Sm1a (76 aa).

Positions 1–22 (MAYICAXTLAFLLCVNTGIIQA) are cleaved as a signal peptide.

This sequence belongs to the scoloptoxin-13 family. Contains 4 disulfide bonds. As to expression, expressed by the venom gland.

Its subcellular location is the secreted. The protein is U-scoloptoxin(13)-Sm1a of Scolopendra morsitans (Tanzanian blue ringleg centipede).